The primary structure comprises 348 residues: Holliday junction branch migration complex subunit RuvB (348 aa).

The interval 1-183 (MAPQPRRLIA…FGIPIRLEYY (183 aa)) is large ATPase domain (RuvB-L). Residues leucine 22, arginine 23, glycine 64, lysine 67, threonine 68, threonine 69, 130-132 (EDF), arginine 173, tyrosine 183, and arginine 220 each bind ATP. Threonine 68 contributes to the Mg(2+) binding site. Positions 184-254 (TVEELECIVR…VADRALRLLD (71 aa)) are small ATPAse domain (RuvB-S). The head domain (RuvB-H) stretch occupies residues 257-348 (HIGLDQMDRR…FQLFSEGGEE (92 aa)). 3 residues coordinate DNA: arginine 293, arginine 312, and arginine 317.

This sequence belongs to the RuvB family. Homohexamer. Forms an RuvA(8)-RuvB(12)-Holliday junction (HJ) complex. HJ DNA is sandwiched between 2 RuvA tetramers; dsDNA enters through RuvA and exits via RuvB. An RuvB hexamer assembles on each DNA strand where it exits the tetramer. Each RuvB hexamer is contacted by two RuvA subunits (via domain III) on 2 adjacent RuvB subunits; this complex drives branch migration. In the full resolvosome a probable DNA-RuvA(4)-RuvB(12)-RuvC(2) complex forms which resolves the HJ.

The protein localises to the cytoplasm. It carries out the reaction ATP + H2O = ADP + phosphate + H(+). In terms of biological role, the RuvA-RuvB-RuvC complex processes Holliday junction (HJ) DNA during genetic recombination and DNA repair, while the RuvA-RuvB complex plays an important role in the rescue of blocked DNA replication forks via replication fork reversal (RFR). RuvA specifically binds to HJ cruciform DNA, conferring on it an open structure. The RuvB hexamer acts as an ATP-dependent pump, pulling dsDNA into and through the RuvAB complex. RuvB forms 2 homohexamers on either side of HJ DNA bound by 1 or 2 RuvA tetramers; 4 subunits per hexamer contact DNA at a time. Coordinated motions by a converter formed by DNA-disengaged RuvB subunits stimulates ATP hydrolysis and nucleotide exchange. Immobilization of the converter enables RuvB to convert the ATP-contained energy into a lever motion, pulling 2 nucleotides of DNA out of the RuvA tetramer per ATP hydrolyzed, thus driving DNA branch migration. The RuvB motors rotate together with the DNA substrate, which together with the progressing nucleotide cycle form the mechanistic basis for DNA recombination by continuous HJ branch migration. Branch migration allows RuvC to scan DNA until it finds its consensus sequence, where it cleaves and resolves cruciform DNA. This Methylocella silvestris (strain DSM 15510 / CIP 108128 / LMG 27833 / NCIMB 13906 / BL2) protein is Holliday junction branch migration complex subunit RuvB.